The sequence spans 304 residues: Putative S-adenosyl-L-methionine-dependent methyltransferase MUL_0816 (304 aa).

Residues D130 and 159–160 contribute to the S-adenosyl-L-methionine site; that span reads DL.

The protein belongs to the UPF0677 family.

Exhibits S-adenosyl-L-methionine-dependent methyltransferase activity. The sequence is that of Putative S-adenosyl-L-methionine-dependent methyltransferase MUL_0816 from Mycobacterium ulcerans (strain Agy99).